The primary structure comprises 378 residues: Ferrochelatase (378 aa).

Fe cation-binding residues include H214 and E295.

Belongs to the ferrochelatase family.

The protein localises to the cytoplasm. It carries out the reaction heme b + 2 H(+) = protoporphyrin IX + Fe(2+). It participates in porphyrin-containing compound metabolism; protoheme biosynthesis; protoheme from protoporphyrin-IX: step 1/1. Its function is as follows. Catalyzes the ferrous insertion into protoporphyrin IX. This is Ferrochelatase from Hydrogenovibrio crunogenus (strain DSM 25203 / XCL-2) (Thiomicrospira crunogena).